Consider the following 375-residue polypeptide: Tyrosine--tRNA ligase (375 aa).

Residues Y37, Y168, Q172, D175, and Q190 each contribute to the L-tyrosine site. The 'KMSKS' region signature appears at 251 to 255 (KMSKS). K254 serves as a coordination point for ATP.

This sequence belongs to the class-I aminoacyl-tRNA synthetase family. TyrS type 4 subfamily. As to quaternary structure, homodimer.

Its subcellular location is the cytoplasm. The catalysed reaction is tRNA(Tyr) + L-tyrosine + ATP = L-tyrosyl-tRNA(Tyr) + AMP + diphosphate + H(+). In terms of biological role, catalyzes the attachment of tyrosine to tRNA(Tyr) in a two-step reaction: tyrosine is first activated by ATP to form Tyr-AMP and then transferred to the acceptor end of tRNA(Tyr). This chain is Tyrosine--tRNA ligase, found in Pyrococcus furiosus (strain ATCC 43587 / DSM 3638 / JCM 8422 / Vc1).